A 271-amino-acid chain; its full sequence is Mediator of RNA polymerase II transcription subunit 18 (271 aa).

Positions 89–119 (FGGNPSSSGDPDVSMSGLEEKPSSSSSSYSY) are disordered.

The protein belongs to the Mediator complex subunit 18 family. In terms of assembly, component of the Mediator complex.

Its subcellular location is the nucleus. Its function is as follows. Component of the Mediator complex, a coactivator involved in the regulated transcription of nearly all RNA polymerase II-dependent genes. Mediator functions as a bridge to convey information from gene-specific regulatory proteins to the basal RNA polymerase II transcription machinery. Mediator is recruited to promoters by direct interactions with regulatory proteins and serves as a scaffold for the assembly of a functional preinitiation complex with RNA polymerase II and the general transcription factors. In Aspergillus niger (strain ATCC MYA-4892 / CBS 513.88 / FGSC A1513), this protein is Mediator of RNA polymerase II transcription subunit 18 (srb5).